The sequence spans 135 residues: Kappa-casein (135 aa).

An O-linked (GalNAc...) threonine glycan is attached at threonine 96. Serine 114 carries the post-translational modification Phosphoserine; alternate. Serine 114 carries O-linked (GalNAc...) serine; alternate glycosylation. An O-linked (GalNAc...) threonine glycan is attached at threonine 131. A Phosphoserine modification is found at serine 132.

The protein belongs to the kappa-casein family. Mammary gland specific. Secreted in milk.

Its subcellular location is the secreted. Kappa-casein stabilizes micelle formation, preventing casein precipitation in milk. This chain is Kappa-casein (CSN3), found in Equus grevyi (Grevy's zebra).